We begin with the raw amino-acid sequence, 242 residues long: Probable 2-phosphosulfolactate phosphatase (242 aa).

Belongs to the ComB family. Mg(2+) is required as a cofactor.

The catalysed reaction is (2R)-O-phospho-3-sulfolactate + H2O = (2R)-3-sulfolactate + phosphate. The polypeptide is Probable 2-phosphosulfolactate phosphatase (Caldicellulosiruptor saccharolyticus (strain ATCC 43494 / DSM 8903 / Tp8T 6331)).